Reading from the N-terminus, the 307-residue chain is 4-hydroxybenzoate octaprenyltransferase (307 aa).

The next 7 membrane-spanning stretches (helical) occupy residues 27 to 47 (AGWL…AGGF), 50 to 70 (WHLL…GCCI), 101 to 121 (LAVG…TNAL), 142 to 162 (CVAM…PMAF), 179 to 199 (AAVP…VLAY), 239 to 259 (LLAW…AAGL), and 285 to 305 (FRLN…DLGW).

Belongs to the UbiA prenyltransferase family. It depends on Mg(2+) as a cofactor.

It is found in the cell inner membrane. The catalysed reaction is all-trans-octaprenyl diphosphate + 4-hydroxybenzoate = 4-hydroxy-3-(all-trans-octaprenyl)benzoate + diphosphate. It functions in the pathway cofactor biosynthesis; ubiquinone biosynthesis. In terms of biological role, catalyzes the prenylation of para-hydroxybenzoate (PHB) with an all-trans polyprenyl group. Mediates the second step in the final reaction sequence of ubiquinone-8 (UQ-8) biosynthesis, which is the condensation of the polyisoprenoid side chain with PHB, generating the first membrane-bound Q intermediate 3-octaprenyl-4-hydroxybenzoate. The protein is 4-hydroxybenzoate octaprenyltransferase of Methylibium petroleiphilum (strain ATCC BAA-1232 / LMG 22953 / PM1).